The sequence spans 306 residues: MVGTTATDVAPTMGVKIFSAGVAACLADVITFPLDTAKVRLQIQGECQTTSGIRYKGVLGTITTLAKTEGPLKLYSGLPAGLQRQISFASLRIGLYDTVQEFWGGEEATPSLRSKICAGLTTGGVAVFIGQPTEVVKVRLQAQSHLHGLKPRYTGTYNAYRIIATTESLSTLWKGTTPNLLRNIIINCTELVTYDLMKGALVRNDILADDVPCHLLSALIAGFCTTLLSSPVDVVKTRFINSPQGQYTSVPSCAMSMLTKEGPTAFFKGFAPSFLRLASWNVIMFVCFEKLKRELMKSRQTVDCAT.

The Mitochondrial intermembrane portion of the chain corresponds to 1–10 (MVGTTATDVA). The helical transmembrane segment at 11-32 (PTMGVKIFSAGVAACLADVITF) threads the bilayer. 3 Solcar repeats span residues 11-102 (PTMG…VQEF), 110-200 (PSLR…MKGA), and 209-294 (DDVP…LKRE). Residues 33 to 73 (PLDTAKVRLQIQGECQTTSGIRYKGVLGTITTLAKTEGPLK) are Mitochondrial matrix-facing. K56 serves as a coordination point for fatty acid 16:0. A helical transmembrane segment spans residues 74-96 (LYSGLPAGLQRQISFASLRIGLY). The Mitochondrial intermembrane segment spans residues 97-115 (DTVQEFWGGEEATPSLRSK). Residues 116–132 (ICAGLTTGGVAVFIGQP) traverse the membrane as a helical segment. At 133 to 177 (TEVVKVRLQAQSHLHGLKPRYTGTYNAYRIIATTESLSTLWKGTT) the chain is on the mitochondrial matrix side. Residues 178-194 (PNLLRNIIINCTELVTY) form a helical membrane-spanning segment. The Mitochondrial intermembrane segment spans residues 195-211 (DLMKGALVRNDILADDV). Residues 212–231 (PCHLLSALIAGFCTTLLSSP) traverse the membrane as a helical segment. At 232–265 (VDVVKTRFINSPQGQYTSVPSCAMSMLTKEGPTA) the chain is on the mitochondrial matrix side. C253 bears the Cysteine sulfenic acid (-SOH) mark. A helical transmembrane segment spans residues 266–288 (FFKGFAPSFLRLASWNVIMFVCF). K268 provides a ligand contact to fatty acid 16:0. At 289 to 306 (EKLKRELMKSRQTVDCAT) the chain is on the mitochondrial intermembrane side.

It belongs to the mitochondrial carrier (TC 2.A.29) family. Most probably functions as a monomer. Binds one purine nucleotide per monomer. However, has also been suggested to function as a homodimer or a homotetramer. Tightly associates with cardiolipin in the mitochondrion inner membrane; may stabilize and regulate its activity. May undergo sulfenylation upon cold exposure. May increase the sensitivity of UCP1 thermogenic function to the activation by noradrenaline probably through structural effects. In terms of processing, may undergo ubiquitin-mediated proteasomal degradation.

It is found in the mitochondrion inner membrane. It carries out the reaction H(+)(in) = H(+)(out). Its activity is regulated as follows. Has no constitutive proton transporter activity and has to be activated by long-chain fatty acids/LCFAs. Inhibited by purine nucleotides. Both purine nucleotides and LCFAs bind the cytosolic side of the transporter and directly compete to activate or inhibit it. Activated by noradrenaline and reactive oxygen species. Despite lacking canonical translational encoding for selenocysteine, a small pool of the protein has been observed to selectively incorporate selenocysteine at 'Cys-253'. Selenocysteine-modified protein is highly sensitive to redox modification and may constitute a pool of protein highly sensitive to activation by elevated levels of reactive oxygen species (ROS). Mitochondrial protein responsible for thermogenic respiration, a specialized capacity of brown adipose tissue and beige fat that participates in non-shivering adaptive thermogenesis to temperature and diet variations and more generally to the regulation of energy balance. Functions as a long-chain fatty acid/LCFA and proton symporter, simultaneously transporting one LCFA and one proton through the inner mitochondrial membrane. However, LCFAs remaining associated with the transporter via their hydrophobic tails, it results in an apparent transport of protons activated by LCFAs. Thereby, dissipates the mitochondrial proton gradient and converts the energy of substrate oxydation into heat instead of ATP. Regulates the production of reactive oxygen species/ROS by mitochondria. This Ochotona dauurica (Daurian pika) protein is Mitochondrial brown fat uncoupling protein 1.